The following is a 597-amino-acid chain: Probable methyltransferase-like protein 25 (597 aa).

Over residues 245 to 254 (ECKGDAESVQ) the composition is skewed to basic and acidic residues. Disordered regions lie at residues 245 to 265 (ECKG…DLSA) and 317 to 342 (TSSQ…KARD). Positions 317 to 326 (TSSQVQNTEK) are enriched in polar residues.

In terms of biological role, probable methyltransferase. The sequence is that of Probable methyltransferase-like protein 25 (Mettl25) from Mus musculus (Mouse).